Reading from the N-terminus, the 443-residue chain is Thymidine phosphorylase (443 aa).

This sequence belongs to the thymidine/pyrimidine-nucleoside phosphorylase family. Homodimer.

The catalysed reaction is thymidine + phosphate = 2-deoxy-alpha-D-ribose 1-phosphate + thymine. Its pathway is pyrimidine metabolism; dTMP biosynthesis via salvage pathway; dTMP from thymine: step 1/2. The enzymes which catalyze the reversible phosphorolysis of pyrimidine nucleosides are involved in the degradation of these compounds and in their utilization as carbon and energy sources, or in the rescue of pyrimidine bases for nucleotide synthesis. The chain is Thymidine phosphorylase from Aeromonas hydrophila subsp. hydrophila (strain ATCC 7966 / DSM 30187 / BCRC 13018 / CCUG 14551 / JCM 1027 / KCTC 2358 / NCIMB 9240 / NCTC 8049).